The chain runs to 773 residues: Elongin-A (773 aa).

One can recognise a TFIIS N-terminal domain in the interval 4 to 79 (ESALQVVEKL…AQWKKLVPVE (76 aa)). Residues 79–93 (ERNNEAEDQDFEKSN) show a composition bias toward basic and acidic residues. The interval 79–480 (ERNNEAEDQD…PRKVPTDVLP (402 aa)) is disordered. Positions 112-124 (YQESWQASGSQPY) are enriched in polar residues. Residues 136-156 (LPELERPHKVAHGHERRDERK) show a composition bias toward basic and acidic residues. The span at 162–174 (SPPYSSDPESSDY) shows a compositional bias: low complexity. Residue Ser195 is modified to Phosphoserine. The segment covering 239 to 248 (KPHKSSHKEK) has biased composition (basic residues). 2 stretches are compositionally biased toward basic and acidic residues: residues 249-265 (RPVDARGDEKSSVMGRE) and 271-304 (SSKEESRRLLSEDSAKEKLPSSVVKKEKDREGNS). Ser310 bears the Phosphoserine mark. Basic and acidic residues-rich tracts occupy residues 317–339 (SDNHFKKPKHKDSEKIKSDKNKQ) and 368–380 (QEGKVRTNSDRKS). Residues Ser380 and Ser383 each carry the phosphoserine modification. The residue at position 430 (Lys430) is an N6-acetyllysine. Residue Ser515 is modified to Phosphoserine. Positions 521–680 (EAGFTGRRMN…PPRDVRRRQE (160 aa)) are activation domain. The tract at residues 549 to 558 (TLHQQCIRVL) is BC-box. Residues 565–609 (IFEVGGVPYSVLEPVLERCTPDQLYRIEECNHVLIEETDQLWKVH) enclose the F-box domain. A disordered region spans residues 671 to 747 (PPRDVRRRQE…VASSSVSYDP (77 aa)). The segment covering 704–718 (SSHVPASNSSSSFHS) has biased composition (low complexity). Over residues 728-744 (PSTSSAHLAPVASSSVS) the composition is skewed to polar residues.

As to quaternary structure, heterotrimer of an A (ELOA, ELOA2 or ELOA3P), ELOB and ELOC subunit. Part of a multisubunit ubiquitin ligase complex consisting of elongin BC complex (ELOB and ELOC), elongin A/ELOA, RBX1 and CUL5. Interacts with ERCC6; the interaction is induced by DNA damaging agents or inhibitors of RNA polymerase II elongation. Interacts (via BC-box) with CUL5.

Its subcellular location is the nucleus. In terms of biological role, SIII, also known as elongin, is a general transcription elongation factor that increases the RNA polymerase II transcription elongation past template-encoded arresting sites. Subunit A is transcriptionally active and its transcription activity is strongly enhanced by binding to the dimeric complex of the SIII regulatory subunits B and C (elongin BC complex). Functionally, as part of a multisubunit complex composed of elongin BC complex (ELOB and ELOC), elongin A/ELOA, RBX1 and CUL5; polyubiquitinates monoubiquitinated POLR2A. This is Elongin-A (Eloa) from Rattus norvegicus (Rat).